The following is a 79-amino-acid chain: Antimicrobial peptide UyCT1 (79 aa).

The N-terminal stretch at 1–23 (MKTQLAFLAITVILMQLFAQTEA) is a signal peptide. Ile-37 carries the isoleucine amide modification. The propeptide occupies 41–79 (GLRNVDQIADLFDSGLSDADDLFDSGLSDADAKFMKMFM).

Belongs to the non-disulfide-bridged peptide (NDBP) superfamily. Short antimicrobial peptide (group 4) family. Expressed by the venom gland.

The protein resides in the secreted. It localises to the target cell membrane. Inhibits the growth of Gram-positive (S.aureus, MIC=15 uM) and Gram-negative bacteria (E.coli, MIC=10 uM and P.aeruginosa, MIC=10 uM). It also shows 26% of hemolysis when 15 uM are tested (81% at 50 uM). In terms of biological role, inhibits the growth of Gram-negative bacteria (E.coli, MIC=25 uM and P.aeruginosa, MIC=40 uM). It also shows 7% of hemolysis when 50 uM are tested. Does not show activity against the Gram-positive bacteria S.aureus. This chain is Antimicrobial peptide UyCT1, found in Urodacus yaschenkoi (Inland robust scorpion).